The chain runs to 387 residues: tRNA-specific 2-thiouridylase MnmA (387 aa).

Residues 34–41 and M60 each bind ATP; that span reads AMSGGVDS. The Nucleophile role is filled by C127. C127 and C223 are disulfide-bonded. ATP is bound at residue G151. Residues 173–175 form an interaction with tRNA region; the sequence is KDQ. Residue C223 is the Cysteine persulfide intermediate of the active site.

The protein belongs to the MnmA/TRMU family.

The protein resides in the cytoplasm. It carries out the reaction S-sulfanyl-L-cysteinyl-[protein] + uridine(34) in tRNA + AH2 + ATP = 2-thiouridine(34) in tRNA + L-cysteinyl-[protein] + A + AMP + diphosphate + H(+). Catalyzes the 2-thiolation of uridine at the wobble position (U34) of tRNA, leading to the formation of s(2)U34. The sequence is that of tRNA-specific 2-thiouridylase MnmA from Anaplasma marginale (strain St. Maries).